A 342-amino-acid polypeptide reads, in one-letter code: 4-hydroxy-2-oxovalerate aldolase (342 aa).

Residues 7–257 (IWITEVALRD…KTGVDLYKMM (251 aa)) enclose the Pyruvate carboxyltransferase domain. Residue 15 to 16 (RD) coordinates substrate. Mn(2+) is bound at residue aspartate 16. Histidine 19 functions as the Proton acceptor in the catalytic mechanism. Substrate contacts are provided by serine 169 and histidine 196. Mn(2+) is bound by residues histidine 196 and histidine 198. Tyrosine 287 contacts substrate.

It belongs to the 4-hydroxy-2-oxovalerate aldolase family.

It catalyses the reaction (S)-4-hydroxy-2-oxopentanoate = acetaldehyde + pyruvate. This Geobacillus thermodenitrificans (strain NG80-2) protein is 4-hydroxy-2-oxovalerate aldolase (nbaI).